The following is a 248-amino-acid chain: Tabinhibitin 10 (248 aa).

A signal peptide spans 1 to 22 (MTLKRIFCAALALIVLQSVASA). The 143-residue stretch at 66-208 (LQKTNWLRGV…NYKGAFHCSL (143 aa)) folds into the SCP domain. Positions 221-223 (RGD) match the Cell attachment site motif.

Belongs to the CRISP family. As to expression, expressed in salivary glands.

It is found in the secreted. Inhibits platelet aggregation induced by all agonists tested (ADP, arachidonic acid, the thromboxane A2 analog U46619, thrombin, and snake venom snaclecs (TMVA that activates platelet through GPIB, and stejnulxin that specifically acts through GPVI (GP6))). May act by competing with fibrinogen for binding to glycoprotein IIb/IIIa (ITGA2B/ITGB3). In Tabanus yao (Horsefly), this protein is Tabinhibitin 10.